The chain runs to 1926 residues: Rho GTPase-activating protein 21-A (1926 aa).

The interval 1–41 (MATRRAIVPEQQQEPSSPASEISKNKDGQEQSEMVSPMEEE) is disordered. Over residues 10 to 22 (EQQQEPSSPASEI) the composition is skewed to polar residues. A PDZ domain is found at 77–162 (HTSIKDEENG…TLELSVMPKD (86 aa)). Disordered regions lie at residues 211–236 (VEVP…TTQP), 353–378 (PTAQ…QIDW), 416–487 (TDYN…RSES), 571–592 (QPTR…DRSG), 640–704 (FQRK…DSDA), and 868–905 (GKLG…DVFS). 3 stretches are compositionally biased toward polar residues: residues 216 to 236 (SGTS…TTQP), 353 to 372 (PTAQ…SPGP), and 416 to 429 (TDYN…FSGQ). Residues 441-451 (QQSVQMRQRSV) are compositionally biased toward low complexity. A compositionally biased stretch (basic and acidic residues) spans 452 to 466 (SQERLEDPVLMKEWP). A compositionally biased stretch (polar residues) spans 468–479 (SASQDTLSSAVA). Positions 640 to 669 (FQRKTQTESASGFQLDSVKTSMSASSSPPA) are enriched in polar residues. Residues 906-1019 (DSNKEGFLYF…WIKAIQENGN (114 aa)) enclose the PH domain. The span at 1044 to 1064 (MSSASNKSEQSPKAPRQTLSI) shows a compositional bias: polar residues. Positions 1044 to 1107 (MSSASNKSEQ…SPPKDKGSWR (64 aa)) are disordered. The span at 1083 to 1105 (PKQESERRLFSKDDISPPKDKGS) shows a compositional bias: basic and acidic residues. Positions 1126–1318 (VRLDDCPPAH…TLIQKHDWFF (193 aa)) constitute a Rho-GAP domain. 6 disordered regions span residues 1330–1381 (VHEE…SGKD), 1396–1416 (ASRK…EDEL), 1512–1540 (QMEE…PKVV), 1573–1598 (LDPN…DERS), 1626–1658 (RQHR…TPRL), and 1827–1915 (STSE…LSGT). The span at 1512 to 1534 (QMEESMSDSGTMLSNSSQASAQR) shows a compositional bias: polar residues. Composition is skewed to polar residues over residues 1639-1653 (VQAN…TEGS) and 1866-1902 (TADI…NNFS).

The protein resides in the golgi apparatus membrane. It localises to the cell junction. It is found in the cytoplasmic vesicle membrane. Its subcellular location is the cytoplasm. The protein localises to the cytoskeleton. In terms of biological role, GTPase-activating protein (GAP) for rhoa and cdc42. This chain is Rho GTPase-activating protein 21-A (arhgap21-a), found in Xenopus laevis (African clawed frog).